A 583-amino-acid chain; its full sequence is Laccase-21 (583 aa).

The first 29 residues, 1–29, serve as a signal peptide directing secretion; that stretch reads MGIAKIPAVLWLLACAVLTFAVAISPAHG. Plastocyanin-like domains are found at residues 39–155 and 165–323; these read FITE…PKHG and KEIP…YYTG. Asn-85 carries N-linked (GlcNAc...) asparagine glycosylation. The Cu cation site is built by His-89, His-91, His-134, and His-136. Asn-282, Asn-311, Asn-384, Asn-387, Asn-399, Asn-409, and Asn-446 each carry an N-linked (GlcNAc...) asparagine glycan. A Plastocyanin-like 3 domain is found at 436-567; it reads FPNNPAPVFV…NTVFIVKDGK (132 aa). Residues His-484, His-487, His-489, His-546, Cys-547, His-548, His-552, and Met-557 each coordinate Cu cation.

This sequence belongs to the multicopper oxidase family. It depends on Cu cation as a cofactor.

It is found in the secreted. It localises to the extracellular space. Its subcellular location is the apoplast. It carries out the reaction 4 hydroquinone + O2 = 4 benzosemiquinone + 2 H2O. Its function is as follows. Lignin degradation and detoxification of lignin-derived products. This Oryza sativa subsp. japonica (Rice) protein is Laccase-21 (LAC21).